The following is a 417-amino-acid chain: Gamma-glutamyl phosphate reductase (417 aa).

It belongs to the gamma-glutamyl phosphate reductase family.

The protein resides in the cytoplasm. It catalyses the reaction L-glutamate 5-semialdehyde + phosphate + NADP(+) = L-glutamyl 5-phosphate + NADPH + H(+). Its pathway is amino-acid biosynthesis; L-proline biosynthesis; L-glutamate 5-semialdehyde from L-glutamate: step 2/2. Catalyzes the NADPH-dependent reduction of L-glutamate 5-phosphate into L-glutamate 5-semialdehyde and phosphate. The product spontaneously undergoes cyclization to form 1-pyrroline-5-carboxylate. The protein is Gamma-glutamyl phosphate reductase of Escherichia coli O81 (strain ED1a).